Here is a 727-residue protein sequence, read N- to C-terminus: 1,4-alpha-glucan branching enzyme GlgB (727 aa).

The Nucleophile role is filled by aspartate 405. Catalysis depends on glutamate 458, which acts as the Proton donor.

The protein belongs to the glycosyl hydrolase 13 family. GlgB subfamily. In terms of assembly, monomer.

The catalysed reaction is Transfers a segment of a (1-&gt;4)-alpha-D-glucan chain to a primary hydroxy group in a similar glucan chain.. It functions in the pathway glycan biosynthesis; glycogen biosynthesis. Functionally, catalyzes the formation of the alpha-1,6-glucosidic linkages in glycogen by scission of a 1,4-alpha-linked oligosaccharide from growing alpha-1,4-glucan chains and the subsequent attachment of the oligosaccharide to the alpha-1,6 position. This chain is 1,4-alpha-glucan branching enzyme GlgB, found in Yersinia enterocolitica serotype O:8 / biotype 1B (strain NCTC 13174 / 8081).